A 107-amino-acid polypeptide reads, in one-letter code: Thioredoxin (107 aa).

Residues 2 to 107 (SEVLHINDAD…QLANFINQHI (106 aa)) form the Thioredoxin domain. Cysteines 32 and 35 form a disulfide.

Belongs to the thioredoxin family.

In terms of biological role, participates in various redox reactions through the reversible oxidation of its active center dithiol to a disulfide and catalyzes dithiol-disulfide exchange reactions. The protein is Thioredoxin (trxA) of Haemophilus influenzae (strain ATCC 51907 / DSM 11121 / KW20 / Rd).